The chain runs to 375 residues: CC-adding tRNA nucleotidyltransferase (375 aa).

27–30 (GAVR) is a binding site for CTP. Mg(2+)-binding residues include Asp-40 and Asp-42. CTP contacts are provided by residues 95 to 96 (RD), Asn-100, 137 to 146 (DPLRMLRAPR), and Arg-177.

The protein belongs to the tRNA nucleotidyltransferase/poly(A) polymerase family. The cofactor is Mg(2+).

The catalysed reaction is a tRNA precursor + 2 CTP = a tRNA with a 3' CC end + 2 diphosphate. In terms of biological role, tRNA nucleotidyltransferase involved in the synthesis of the tRNA CCA terminus. Adds the two cytidine residues to tRNA. The protein is CC-adding tRNA nucleotidyltransferase of Halalkalibacterium halodurans (strain ATCC BAA-125 / DSM 18197 / FERM 7344 / JCM 9153 / C-125) (Bacillus halodurans).